The sequence spans 603 residues: UvrABC system protein C (603 aa).

Residues 17 to 94 enclose the GIY-YIG domain; that stretch reads TTSGCYKMLN…IKTHKPDYNV (78 aa). The UVR domain maps to 199 to 234; that stretch reads SEILSQIDIKLKLAVQKEDFETAIKLKEMKSSLIEI.

The protein belongs to the UvrC family. Interacts with UvrB in an incision complex.

The protein localises to the cytoplasm. Its function is as follows. The UvrABC repair system catalyzes the recognition and processing of DNA lesions. UvrC both incises the 5' and 3' sides of the lesion. The N-terminal half is responsible for the 3' incision and the C-terminal half is responsible for the 5' incision. The protein is UvrABC system protein C of Borrelia garinii subsp. bavariensis (strain ATCC BAA-2496 / DSM 23469 / PBi) (Borreliella bavariensis).